We begin with the raw amino-acid sequence, 341 residues long: Foldase protein PrsA (341 aa).

The first 22 residues, methionine 1–glycine 22, serve as a signal peptide directing secretion. The N-palmitoyl cysteine moiety is linked to residue cysteine 23. A lipid anchor (S-diacylglycerol cysteine) is attached at cysteine 23. Positions proline 199 to lysine 291 constitute a PpiC domain.

This sequence belongs to the PrsA family.

It localises to the cell membrane. The catalysed reaction is [protein]-peptidylproline (omega=180) = [protein]-peptidylproline (omega=0). In terms of biological role, plays a major role in protein secretion by helping the post-translocational extracellular folding of several secreted proteins. The chain is Foldase protein PrsA from Clostridium kluyveri (strain NBRC 12016).